We begin with the raw amino-acid sequence, 445 residues long: 3-dehydroquinate synthase, chloroplastic (445 aa).

A chloroplast-targeting transit peptide spans 1–68 (MAAFSLSAKQ…RASASSTAPV (68 aa)). NAD(+) is bound by residues Asn122, 153 to 155 (DGE), Lys158, 186 to 191 (GGVIGD), 211 to 212 (TT), Lys224, Lys233, and 251 to 254 (TLNT). Glu266 provides a ligand contact to a divalent metal cation. Position 308 (Lys308) interacts with NAD(+). A divalent metal cation contacts are provided by His329 and His346.

This sequence belongs to the sugar phosphate cyclases superfamily. Dehydroquinate synthase family. In terms of assembly, homodimer. Requires a divalent metal cation as cofactor. NAD(+) serves as cofactor.

It localises to the plastid. It is found in the chloroplast. The catalysed reaction is 7-phospho-2-dehydro-3-deoxy-D-arabino-heptonate = 3-dehydroquinate + phosphate. It functions in the pathway metabolic intermediate biosynthesis; chorismate biosynthesis; chorismate from D-erythrose 4-phosphate and phosphoenolpyruvate: step 2/7. Functionally, catalyzes the second step in the shikimate pathway. This is 3-dehydroquinate synthase, chloroplastic (DHQS) from Actinidia chinensis var. chinensis (Chinese soft-hair kiwi).